We begin with the raw amino-acid sequence, 75 residues long: Nigwaprin-a (75 aa).

The signal sequence occupies residues 1 to 24; it reads MSSGGLLLLLGLLTLWAELTPVSG. Positions 27 to 72 constitute a WAP domain; the sequence is RPVKPGLCPPRPQKPPCVKECKNDWSCRGEQKCCRYGCIYECRDPI. Cystine bridges form between Cys34–Cys60, Cys43–Cys64, Cys47–Cys59, and Cys53–Cys68.

The protein belongs to the venom waprin family. In terms of tissue distribution, expressed by the venom gland.

It is found in the secreted. In terms of biological role, damages membranes of susceptible bacteria. Has no hemolytic activity. Not toxic to mice. Does not inhibit the proteinases elastase and cathepsin G. This chain is Nigwaprin-a, found in Cryptophis nigrescens (Eastern small-eyed snake).